The sequence spans 200 residues: 3-isopropylmalate dehydratase small subunit (200 aa).

The protein belongs to the LeuD family. LeuD type 1 subfamily. Heterodimer of LeuC and LeuD.

It carries out the reaction (2R,3S)-3-isopropylmalate = (2S)-2-isopropylmalate. Its pathway is amino-acid biosynthesis; L-leucine biosynthesis; L-leucine from 3-methyl-2-oxobutanoate: step 2/4. Catalyzes the isomerization between 2-isopropylmalate and 3-isopropylmalate, via the formation of 2-isopropylmaleate. This chain is 3-isopropylmalate dehydratase small subunit, found in Methylobacterium radiotolerans (strain ATCC 27329 / DSM 1819 / JCM 2831 / NBRC 15690 / NCIMB 10815 / 0-1).